Here is a 217-residue protein sequence, read N- to C-terminus: Adenylate kinase (217 aa).

Position 10 to 15 (10 to 15 (GAGKGT)) interacts with ATP. Positions 30 to 59 (STGDMFRAAIKAGTALGMKAKEYMDAGSLV) are NMP. AMP contacts are provided by residues T31, R36, 57-59 (SLV), 85-88 (GFPR), and Q92. The LID stretch occupies residues 126 to 163 (GRRICRQCGGTYHMVFNPPAAEAVCDKCGGELYQRSDD). Residue R127 coordinates ATP. The Zn(2+) site is built by C130 and C133. 136 to 137 (TY) contributes to the ATP binding site. 2 residues coordinate Zn(2+): C150 and C153. Residues R160 and R171 each contribute to the AMP site. Q199 serves as a coordination point for ATP.

It belongs to the adenylate kinase family. Monomer.

Its subcellular location is the cytoplasm. The catalysed reaction is AMP + ATP = 2 ADP. It participates in purine metabolism; AMP biosynthesis via salvage pathway; AMP from ADP: step 1/1. Functionally, catalyzes the reversible transfer of the terminal phosphate group between ATP and AMP. Plays an important role in cellular energy homeostasis and in adenine nucleotide metabolism. This is Adenylate kinase from Desulfitobacterium hafniense (strain DSM 10664 / DCB-2).